The sequence spans 239 residues: Ribosomal RNA small subunit methyltransferase G (239 aa).

Residues G78, F83, 129–130 (AE), and R148 contribute to the S-adenosyl-L-methionine site.

This sequence belongs to the methyltransferase superfamily. RNA methyltransferase RsmG family.

It localises to the cytoplasm. Its function is as follows. Specifically methylates the N7 position of a guanine in 16S rRNA. The protein is Ribosomal RNA small subunit methyltransferase G of Clostridium botulinum (strain Eklund 17B / Type B).